The chain runs to 238 residues: Orotidine 5'-phosphate decarboxylase (238 aa).

Substrate-binding positions include Asp-10, Lys-32, 59–68, Thr-122, Arg-184, Gln-193, Gly-213, and Arg-214; that span reads DLKLHDIPNT. The Proton donor role is filled by Lys-61.

It belongs to the OMP decarboxylase family. Type 1 subfamily. In terms of assembly, homodimer.

It catalyses the reaction orotidine 5'-phosphate + H(+) = UMP + CO2. The protein operates within pyrimidine metabolism; UMP biosynthesis via de novo pathway; UMP from orotate: step 2/2. Catalyzes the decarboxylation of orotidine 5'-monophosphate (OMP) to uridine 5'-monophosphate (UMP). This Bacillus cereus (strain G9842) protein is Orotidine 5'-phosphate decarboxylase.